The sequence spans 88 residues: Small ribosomal subunit protein uS17 (88 aa).

This sequence belongs to the universal ribosomal protein uS17 family. In terms of assembly, part of the 30S ribosomal subunit.

Functionally, one of the primary rRNA binding proteins, it binds specifically to the 5'-end of 16S ribosomal RNA. The polypeptide is Small ribosomal subunit protein uS17 (Vesicomyosocius okutanii subsp. Calyptogena okutanii (strain HA)).